Here is a 906-residue protein sequence, read N- to C-terminus: Protein translocase subunit SecA (906 aa).

ATP-binding positions include glutamine 86, 104–108, and aspartate 499; that span reads GEGKT. Residues 862-885 are disordered; the sequence is KPVVSRIDPKDRNPDDPTSWGRVS. Residues cysteine 890, cysteine 892, cysteine 901, and histidine 902 each contribute to the Zn(2+) site.

Belongs to the SecA family. As to quaternary structure, monomer and homodimer. Part of the essential Sec protein translocation apparatus which comprises SecA, SecYEG and auxiliary proteins SecDF-YajC and YidC. It depends on Zn(2+) as a cofactor.

It is found in the cell inner membrane. The protein localises to the cytoplasm. It carries out the reaction ATP + H2O + cellular proteinSide 1 = ADP + phosphate + cellular proteinSide 2.. Functionally, part of the Sec protein translocase complex. Interacts with the SecYEG preprotein conducting channel. Has a central role in coupling the hydrolysis of ATP to the transfer of proteins into and across the cell membrane, serving both as a receptor for the preprotein-SecB complex and as an ATP-driven molecular motor driving the stepwise translocation of polypeptide chains across the membrane. The sequence is that of Protein translocase subunit SecA from Rickettsia massiliae (strain Mtu5).